Here is a 149-residue protein sequence, read N- to C-terminus: Calmodulin-1 (149 aa).

Position 2 is an N-acetylalanine (alanine 2). EF-hand domains are found at residues 8–43 (EQIA…LGQN), 44–79 (PTEA…KMKD), 81–116 (DSEE…LGEK), and 117–149 (LTDE…MTAK). Aspartate 21 provides a ligand contact to Ca(2+). At lysine 22 the chain carries N6-acetyllysine; alternate. Lysine 22 participates in a covalent cross-link: Glycyl lysine isopeptide (Lys-Gly) (interchain with G-Cter in SUMO2); alternate. Lysine 22 participates in a covalent cross-link: Glycyl lysine isopeptide (Lys-Gly) (interchain with G-Cter in ubiquitin); alternate. 4 residues coordinate Ca(2+): aspartate 23, aspartate 25, threonine 27, and glutamate 32. A Phosphothreonine; by CaMK4 modification is found at threonine 45. Residues aspartate 57, aspartate 59, asparagine 61, threonine 63, and glutamate 68 each contribute to the Ca(2+) site. The interval 77-149 (MKDTDSEEEI…EEFVQMMTAK (73 aa)) is necessary and sufficient for interaction with PCP4. A Phosphoserine modification is found at serine 82. Residue aspartate 94 coordinates Ca(2+). Lysine 95 carries the N6-acetyllysine modification. The Ca(2+) site is built by aspartate 96, asparagine 98, and tyrosine 100. At tyrosine 100 the chain carries Phosphotyrosine. Residue serine 102 is modified to Phosphoserine. Ca(2+) is bound at residue glutamate 105. Threonine 111 is subject to Phosphothreonine. Lysine 116 is subject to N6,N6,N6-trimethyllysine; alternate. Position 116 is an N6-methyllysine; alternate (lysine 116). Residues aspartate 130, aspartate 132, aspartate 134, and glutamine 136 each coordinate Ca(2+). The residue at position 139 (tyrosine 139) is a Phosphotyrosine. Glutamate 141 contacts Ca(2+).

Belongs to the calmodulin family. As to quaternary structure, homotetramer. Interacts with MYO1C, MYO5A and RRAD. Interacts with MYO10. Interacts with CEP97, CCP110, TTN/titin and SRY. Interacts with USP6; the interaction is calcium dependent. Interacts with CDK5RAP2. Interacts with SCN5A. Interacts with RYR1. Interacts with FCHO1. Interacts with MIP in a 1:2 stoichiometry; the interaction with the cytoplasmic domains from two MIP subunits promotes MIP water channel closure. Interacts with ORAI1; this may play a role in the regulation of ORAI1-mediated calcium transport. Interacts with IQCF1. Interacts with SYT7. Interacts with CEACAM1 (via cytoplasmic domain); this interaction is in a calcium dependent manner and reduces homophilic cell adhesion through dissociation of dimer. Interacts with RYR2; regulates RYR2 calcium-release channel activity. Interacts with PCP4; regulates calmodulin calcium-binding. Interacts with the heterotetrameric KCNQ2 and KCNQ3 channel; the interaction is calcium-independent, constitutive and participates in the proper assembly of a functional heterotetrameric M channel. Interacts with alpha-synuclein/SNCA. Interacts with SLC9A1 in a calcium-dependent manner. In the absence of Ca(+2), interacts with GIMAP4 (via IQ domain). Interacts with SCN8A; the interaction modulates the inactivation rate of SCN8A. Interaction with KIF1A; the interaction is increased in presence of calcium and increases neuronal dense core vesicles motility. Interacts with KCNN3. Interacts with KCNQ1 (via C-terminus); forms a heterooctameric structure (with 4:4 KCNQ1:CALM stoichiometry) in a calcium-independent manner. Interacts with PIK3C3; the interaction modulates PIK3C3 kinase activity. Interacts with HINT1; interaction increases in the presence of calcium ions. Interacts with HINT3. Interacts with GARIN2; in mature sperm flagella. Interacts with IQUB. Interacts with SLC26A5 (via STAS domain); this interaction is calcium-dependent and the STAS domain interacts with only one lobe of CALM which is an elongated conformation. Ca(2+)-bound CALM1 binds CNGA1:CNGB1 channel (via CaM1 and CaM2 regions); this interaction modulates the affinity of the channel for cNMPs in response to intracellular Ca(2+) levels. Interacts with ITPR1; this interaction inhibits inositol 1,4,5 trisphosphate binding in both the presence and absence of calcium and 1,4,5 trisphosphate-induced calcium release in the presence of calcium. Component of the SIFI complex. Interacts with KCNN4; this interaction allows channel opening. Interacts with KCNN2; this interaction regulates the channel activity through calcium-binding. In terms of assembly, (Microbial infection) Interacts with Rubella virus protease/methyltransferase p150. (Microbial infection) Interacts with Legionella pneumophila glutamylase SidJ. As to quaternary structure, (Microbial infection) Interacts with C.violaceum CopC. C.violaceum CopC interacts specifically with the apo form of calmodulin. In terms of assembly, (Microbial infection) Interacts with S.flexneri OspC1 and OspC3. S.flexneri OspC1 and OspC3 interact specifically with the apo form of calmodulin and prevents calcium-binding. In terms of processing, ubiquitination results in a strongly decreased activity. Post-translationally, phosphorylation results in a decreased activity.

The protein resides in the cytoplasm. The protein localises to the cytoskeleton. Its subcellular location is the spindle. It is found in the spindle pole. It localises to the microtubule organizing center. The protein resides in the centrosome. The protein localises to the cell projection. Its subcellular location is the cilium. It is found in the flagellum. (Microbial infection) Inactivated by S.flexneri OspC1 and OspC3 proteins, which specifically bind the apo-form of calmodulin, thereby preventing calcium-binding and activity. Its function is as follows. Calmodulin acts as part of a calcium signal transduction pathway by mediating the control of a large number of enzymes, ion channels, aquaporins and other proteins through calcium-binding. Calcium-binding is required for the activation of calmodulin. Among the enzymes to be stimulated by the calmodulin-calcium complex are a number of protein kinases, such as myosin light-chain kinases and calmodulin-dependent protein kinase type II (CaMK2), and phosphatases. Together with CCP110 and centrin, is involved in a genetic pathway that regulates the centrosome cycle and progression through cytokinesis. Is a regulator of voltage-dependent L-type calcium channels. Mediates calcium-dependent inactivation of CACNA1C. Positively regulates calcium-activated potassium channel activity of KCNN2. Forms a potassium channel complex with KCNQ1 and regulates electrophysiological activity of the channel via calcium-binding. Acts as a sensor to modulate the endoplasmic reticulum contacts with other organelles mediated by VMP1:ATP2A2. (Microbial infection) Required for Legionella pneumophila SidJ glutamylase activity. In terms of biological role, (Microbial infection) Required for C.violaceum CopC and S.flexneri OspC3 arginine ADP-riboxanase activity. The chain is Calmodulin-1 from Homo sapiens (Human).